The following is a 518-amino-acid chain: GMP synthase [glutamine-hydrolyzing] (518 aa).

Residues 13 to 203 (KIIVLDFGSQ…ALNICGCKGD (191 aa)) enclose the Glutamine amidotransferase type-1 domain. The active-site Nucleophile is cysteine 90. Active-site residues include histidine 177 and glutamate 179. Residues 204 to 393 (WTMENFSEVE…LGMPDAIVWR (190 aa)) form the GMPS ATP-PPase domain. 231-237 (SGGVDSS) is a binding site for ATP.

As to quaternary structure, homodimer.

The enzyme catalyses XMP + L-glutamine + ATP + H2O = GMP + L-glutamate + AMP + diphosphate + 2 H(+). The protein operates within purine metabolism; GMP biosynthesis; GMP from XMP (L-Gln route): step 1/1. Functionally, catalyzes the synthesis of GMP from XMP. This is GMP synthase [glutamine-hydrolyzing] from Listeria innocua serovar 6a (strain ATCC BAA-680 / CLIP 11262).